The following is a 455-amino-acid chain: Alcohol acyl transferase 1 allele GSb (455 aa).

Catalysis depends on proton acceptor residues histidine 164 and asparagine 385.

It belongs to the plant acyltransferase family. Expressed at very low levels in the skin of ripe fruit.

Functionally, involved in the biosynthesis of volatile esters which confer ripe apple fruit flavor. Alcohol acyl transferase that can use a wide range of alcohols as substrate to produce esters. This chain is Alcohol acyl transferase 1 allele GSb, found in Malus domestica (Apple).